The primary structure comprises 508 residues: NADH-quinone oxidoreductase subunit N 2 (508 aa).

The next 14 helical transmembrane spans lie at 14 to 34 (SYVA…VIVL), 43 to 63 (SLVW…WYTA), 90 to 110 (FTFF…LLSA), 119 to 139 (GAHM…MFMV), 144 to 164 (LLTI…LAGI), 179 to 199 (FLTG…IYGV), 223 to 243 (GPAL…GFGF), 275 to 295 (GAAM…APFT), 298 to 318 (WALI…LVAL), 327 to 347 (MAYS…ASGL), 353 to 373 (ISSV…IFAV), 400 to 420 (AWAL…VGFL), 433 to 455 (GYLW…YYRV), and 473 to 493 (TGIS…TIFA).

It belongs to the complex I subunit 2 family. NDH-1 is composed of 14 different subunits. Subunits NuoA, H, J, K, L, M, N constitute the membrane sector of the complex.

It localises to the cell membrane. It catalyses the reaction a quinone + NADH + 5 H(+)(in) = a quinol + NAD(+) + 4 H(+)(out). Its function is as follows. NDH-1 shuttles electrons from NADH, via FMN and iron-sulfur (Fe-S) centers, to quinones in the respiratory chain. The immediate electron acceptor for the enzyme in this species is believed to be a menaquinone. Couples the redox reaction to proton translocation (for every two electrons transferred, four hydrogen ions are translocated across the cytoplasmic membrane), and thus conserves the redox energy in a proton gradient. The sequence is that of NADH-quinone oxidoreductase subunit N 2 from Symbiobacterium thermophilum (strain DSM 24528 / JCM 14929 / IAM 14863 / T).